We begin with the raw amino-acid sequence, 248 residues long: Ubiquinone biosynthesis O-methyltransferase (248 aa).

Residues Arg-41, Gly-72, Asp-93, and Met-136 each coordinate S-adenosyl-L-methionine.

It belongs to the methyltransferase superfamily. UbiG/COQ3 family.

It carries out the reaction a 3-demethylubiquinol + S-adenosyl-L-methionine = a ubiquinol + S-adenosyl-L-homocysteine + H(+). It catalyses the reaction a 3-(all-trans-polyprenyl)benzene-1,2-diol + S-adenosyl-L-methionine = a 2-methoxy-6-(all-trans-polyprenyl)phenol + S-adenosyl-L-homocysteine + H(+). It participates in cofactor biosynthesis; ubiquinone biosynthesis. In terms of biological role, O-methyltransferase that catalyzes the 2 O-methylation steps in the ubiquinone biosynthetic pathway. This Rhizobium rhizogenes (strain K84 / ATCC BAA-868) (Agrobacterium radiobacter) protein is Ubiquinone biosynthesis O-methyltransferase.